Consider the following 1523-residue polypeptide: ATP-binding cassette sub-family C member 3 (1523 aa).

Topologically, residues 1 to 35 are extracellular; it reads MDRLCGSGELGSKFWDSNLSIYTNTPDLTPCFQNS. A glycan (N-linked (GlcNAc...) asparagine) is linked at asparagine 18. The chain crosses the membrane as a helical span at residues 36–56; it reads LLAWVPCIYLWAALPCYLFYL. Residues 57 to 75 lie on the Cytoplasmic side of the membrane; the sequence is RHHQLGYIVLSWLSRLKTA. Residues 76–96 form a helical membrane-spanning segment; sequence LGVLLWCVSWVDLFYSFHGLI. Residues 97–102 lie on the Extracellular side of the membrane; the sequence is HGSSPA. The helical transmembrane segment at 103 to 123 threads the bilayer; it reads PVFFVTPLVVGITMLLATLLI. Residues 124–129 lie on the Cytoplasmic side of the membrane; it reads QYERLR. Residues 130–150 traverse the membrane as a helical segment; the sequence is GVQSSGVLIIFWLLCVICAII. The Extracellular segment spans residues 151–170; it reads PFRSKILSALAEGKILDPFR. Residues 171 to 191 form a helical membrane-spanning segment; the sequence is FTTFYIYFALVFCALILSCFK. The Cytoplasmic portion of the chain corresponds to 192 to 301; that stretch reads EKPPLFSPEN…KSKQPSFLRA (110 aa). Residues 302–324 traverse the membrane as a helical segment; the sequence is LVRTFTSSLLMSACFNLIQNLLG. Residues 310–593 form the ABC transmembrane type-1 1 domain; sequence LLMSACFNLI…LPQLISGLTQ (284 aa). The Extracellular portion of the chain corresponds to 325-345; that stretch reads FVNPQLLSILIRFISDPTAPT. Residues 346 to 366 traverse the membrane as a helical segment; it reads WWGFLLAGLMFLSSTMQTLIL. The Cytoplasmic segment spans residues 367-419; it reads HQYYHCIFVMALRLRTAIIGVIYRKALVITNSVKRESTVGEMVNLMSVDAQRF. A helical membrane pass occupies residues 420 to 440; that stretch reads MDVSPFINLLWSAPLQVILAI. Tyrosine 441 is a topological domain (extracellular). A helical membrane pass occupies residues 442–462; sequence FLWQILGPSALAGVAVIVLLI. Topologically, residues 463 to 535 are cytoplasmic; sequence PLNGAVSMKM…KGAYLQAIST (73 aa). The chain crosses the membrane as a helical span at residues 536-556; sequence FIWICTPFLVTLITLGVYVYV. The Extracellular portion of the chain corresponds to 557-567; the sequence is DESNVLDAEKA. The chain crosses the membrane as a helical span at residues 568 to 588; the sequence is FVSLSLFNILKIPLNMLPQLI. Residues 589 to 967 are Cytoplasmic-facing; that stretch reads SGLTQASVSL…YAKSMGLCTT (379 aa). Positions 626–850 constitute an ABC transporter 1 domain; it reads ITIHNGTFTW…DGSFANFLRN (225 aa). 660 to 667 is a binding site for ATP; sequence GPVGCGKS. Phosphoserine occurs at positions 903 and 906. Positions 903 to 915 are enriched in polar residues; the sequence is SSLSSEGEVQNRT. The tract at residues 903 to 923 is disordered; it reads SSLSSEGEVQNRTMPKKHTNS. In terms of domain architecture, ABC transmembrane type-1 2 spans 967–1248; sequence TLSICLLYGG…MIRMISDLES (282 aa). Residues 968–988 traverse the membrane as a helical segment; the sequence is LSICLLYGGQSAAAIGANVWL. Residues 989-1013 lie on the Extracellular side of the membrane; that stretch reads SAWSNDAEEHGQQNKTSVRLGVYAA. N-linked (GlcNAc...) asparagine glycosylation occurs at asparagine 1002. Residues 1014–1034 form a helical membrane-spanning segment; it reads LGILQGLLVMLSAFTMVVGAI. Topologically, residues 1035 to 1071 are cytoplasmic; it reads QAARLLHEALLHNKIRSPQSFFDTTPSGRILNRFSKD. Residues 1072 to 1092 form a helical membrane-spanning segment; sequence IYVIDEVLAPTILMLLNSFFT. The Extracellular portion of the chain corresponds to 1093–1096; that stretch reads SIST. Residues 1097–1117 form a helical membrane-spanning segment; that stretch reads IMVIVASTPLFMVVVLPLAVL. The Cytoplasmic portion of the chain corresponds to 1118 to 1191; it reads YGFVQRFYVA…YPYIASNRWL (74 aa). Residues 1192-1212 form a helical membrane-spanning segment; the sequence is GVHVEFVGNCVVLFAALFAVI. Residues 1213–1219 are Extracellular-facing; the sequence is GRNSLNP. A helical membrane pass occupies residues 1220–1240; the sequence is GLVGLSVSYALQVTMALNWMI. Over 1241–1523 the chain is Cytoplasmic; the sequence is RMISDLESNI…YGMAKDAGLA (283 aa). In terms of domain architecture, ABC transporter 2 spans 1287-1519; the sequence is FRNYSVRYRP…GGIFYGMAKD (233 aa). An ATP-binding site is contributed by 1319–1326; sequence GRTGAGKS.

It belongs to the ABC transporter superfamily. ABCC family. Conjugate transporter (TC 3.A.1.208) subfamily. Detected throughout the gastrointestinal tract, liver, lung, pancreas, bladder, gall bladder and at low levels in the adrenal gland.

The protein resides in the basolateral cell membrane. Its subcellular location is the basal cell membrane. It carries out the reaction an S-substituted glutathione(in) + ATP + H2O = an S-substituted glutathione(out) + ADP + phosphate + H(+). The catalysed reaction is ATP + H2O + xenobioticSide 1 = ADP + phosphate + xenobioticSide 2.. It catalyses the reaction 17beta-estradiol 17-O-(beta-D-glucuronate)(in) + ATP + H2O = 17beta-estradiol 17-O-(beta-D-glucuronate)(out) + ADP + phosphate + H(+). The enzyme catalyses dehydroepiandrosterone 3-sulfate(in) + ATP + H2O = dehydroepiandrosterone 3-sulfate(out) + ADP + phosphate + H(+). It carries out the reaction leukotriene C4(in) + ATP + H2O = leukotriene C4(out) + ADP + phosphate + H(+). The catalysed reaction is taurocholate(in) + ATP + H2O = taurocholate(out) + ADP + phosphate + H(+). It catalyses the reaction glycocholate(in) + ATP + H2O = glycocholate(out) + ADP + phosphate + H(+). The enzyme catalyses taurolithocholate 3-sulfate(in) + ATP + H2O = taurolithocholate 3-sulfate(out) + ADP + phosphate + H(+). It carries out the reaction taurochenodeoxycholate 3-sulfate(in) + ATP + H2O = taurochenodeoxycholate 3-sulfate(out) + ADP + phosphate + H(+). The catalysed reaction is (4Z,15Z)-bilirubin IXalpha C8-beta-D-glucuronoside(in) + ATP + H2O = (4Z,15Z)-bilirubin IXalpha C8-beta-D-glucuronoside(out) + ADP + phosphate + H(+). It catalyses the reaction (4Z,15Z)-bilirubin IXalpha C8,C12-beta-D-bisglucuronoside(in) + ATP + H2O = (4Z,15Z)-bilirubin IXalpha C8,C12-beta-D-bisglucuronoside(out) + ADP + phosphate + H(+). Its function is as follows. ATP-dependent transporter of the ATP-binding cassette (ABC) family that binds and hydrolyzes ATP to enable active transport of various substrates including many drugs, toxicants and endogenous compound across cell membranes. Transports glucuronide conjugates such as bilirubin diglucuronide, estradiol-17-beta-o-glucuronide and GSH conjugates such as leukotriene C4 (LTC4). Transports also various bile salts (taurocholate, glycocholate, taurochenodeoxycholate-3-sulfate, taurolithocholate- 3-sulfate). Does not contribute substantially to bile salt physiology but provides an alternative route for the export of bile acids and glucuronides from cholestatic hepatocytes. May contribute to regulate the transport of organic compounds in testes across the blood-testis-barrier. This chain is ATP-binding cassette sub-family C member 3 (Abcc3), found in Mus musculus (Mouse).